Here is a 126-residue protein sequence, read N- to C-terminus: Protein ApaG (126 aa).

Residues 2–126 form the ApaG domain; the sequence is SDTQHQVNVR…FRLAVPGALH (125 aa).

The protein is Protein ApaG of Pseudomonas aeruginosa (strain LESB58).